The following is a 139-amino-acid chain: Maintenance of telomere capping protein 7 (139 aa).

Transmembrane regions (helical) follow at residues 13 to 33 (SHHV…FVLL) and 42 to 62 (FYFL…FVFI). The interval 94 to 121 (RSVANPALPPQKKKKKKKKGTLRTGEVE) is disordered. The segment covering 104 to 114 (QKKKKKKKKGT) has biased composition (basic residues).

Its subcellular location is the membrane. In terms of biological role, may be involved in telomere capping. This Saccharomyces cerevisiae (strain ATCC 204508 / S288c) (Baker's yeast) protein is Maintenance of telomere capping protein 7 (MTC7).